A 1086-amino-acid polypeptide reads, in one-letter code: Calcium-transporting ATPase 9, plasma membrane-type (1086 aa).

Residues M1 to S15 are compositionally biased toward low complexity. The segment at M1–T50 is disordered. Residues M1–N194 lie on the Cytoplasmic side of the membrane. Basic and acidic residues predominate over residues G16–D42. The interaction with calmodulin stretch occupies residues S57 to L68. Residues F195–A215 form a helical membrane-spanning segment. The Lumenal portion of the chain corresponds to V216–L233. A helical membrane pass occupies residues D234 to Y254. Topologically, residues R255–L382 are cytoplasmic. A helical membrane pass occupies residues N383 to V402. The Lumenal segment spans residues A403–I439. Residues F440–L457 form a helical membrane-spanning segment. Residues A458–I857 lie on the Cytoplasmic side of the membrane. Residue D495 is the 4-aspartylphosphate intermediate of the active site. Residues D802 and D806 each coordinate Mg(2+). Residues Q858–V876 traverse the membrane as a helical segment. Residues V877 to L887 lie on the Lumenal side of the membrane. The helical transmembrane segment at K888–A908 threads the bilayer. Topologically, residues T909–L928 are cytoplasmic. A helical transmembrane segment spans residues I929–L951. The Lumenal segment spans residues N952–H963. A helical membrane pass occupies residues E964–N988. The Cytoplasmic segment spans residues E989–K1006. Residues N1007–L1028 form a helical membrane-spanning segment. Over G1029–G1038 the chain is Lumenal. The chain crosses the membrane as a helical span at residues W1039–K1060. The Cytoplasmic portion of the chain corresponds to L1061–A1086.

This sequence belongs to the cation transport ATPase (P-type) (TC 3.A.3) family. Type IIB subfamily.

The protein localises to the membrane. It catalyses the reaction Ca(2+)(in) + ATP + H2O = Ca(2+)(out) + ADP + phosphate + H(+). Activated by calmodulin. Its function is as follows. This magnesium-dependent enzyme catalyzes the hydrolysis of ATP coupled with the translocation of calcium from the cytosol out of the cell or into organelles. The protein is Calcium-transporting ATPase 9, plasma membrane-type (ACA9) of Arabidopsis thaliana (Mouse-ear cress).